We begin with the raw amino-acid sequence, 283 residues long: Bifunctional protein FolD (283 aa).

Residues 166–168 (GAS), serine 191, and isoleucine 232 each bind NADP(+).

It belongs to the tetrahydrofolate dehydrogenase/cyclohydrolase family. As to quaternary structure, homodimer.

The enzyme catalyses (6R)-5,10-methylene-5,6,7,8-tetrahydrofolate + NADP(+) = (6R)-5,10-methenyltetrahydrofolate + NADPH. The catalysed reaction is (6R)-5,10-methenyltetrahydrofolate + H2O = (6R)-10-formyltetrahydrofolate + H(+). It functions in the pathway one-carbon metabolism; tetrahydrofolate interconversion. In terms of biological role, catalyzes the oxidation of 5,10-methylenetetrahydrofolate to 5,10-methenyltetrahydrofolate and then the hydrolysis of 5,10-methenyltetrahydrofolate to 10-formyltetrahydrofolate. This Chromobacterium violaceum (strain ATCC 12472 / DSM 30191 / JCM 1249 / CCUG 213 / NBRC 12614 / NCIMB 9131 / NCTC 9757 / MK) protein is Bifunctional protein FolD.